The sequence spans 97 residues: Defensin alpha 4 (97 aa).

The signal sequence occupies residues 1 to 19 (MRIIAILAAILLVALQVRA). Positions 20 to 63 (GPLQARGDEAPGQEQRGPEDQDISISFAWDKSSALQVSGSTRGM) are excised as a propeptide. 3 disulfide bridges follow: C65–C93, C67–C82, and C72–C92. D97 is a propeptide.

This sequence belongs to the alpha-defensin family. Homodimer; homodimerization seems to be required for killing S.aureus, but not E.coli. Interacts with CD4. Interacts with Bacillus anthracis lef; homodimerization is required for the interaction. In terms of processing, the three-dimensional structure formed by the three intramolecular disulfide bridges is indispensable for effective bacterial killing.

It is found in the secreted. The protein resides in the cytoplasmic vesicle. Its subcellular location is the secretory vesicle. Functionally, host-defense peptide that has antimicrobial activity against Gram-negative bacteria, and to a lesser extent also against Gram-positive bacteria and fungi. Exhibits antimicrobial activity against Gram-negative E.coli and E.aerogenes and Gram-positive S.faecalis, S.aureus and B.cereus and the yeast C.albicans (in vitro). Inhibits corticotropin (ACTH)-stimulated corticosterone production (in vitro). Inhibits enzymatic activity of B.anthracis lef/anthrax lethal factor (in vitro). The polypeptide is Defensin alpha 4 (DEFA4) (Pan troglodytes (Chimpanzee)).